The following is a 98-amino-acid chain: Small ribosomal subunit protein bS20 (98 aa).

This sequence belongs to the bacterial ribosomal protein bS20 family.

Its function is as follows. Binds directly to 16S ribosomal RNA. The protein is Small ribosomal subunit protein bS20 of Synechococcus elongatus (strain ATCC 33912 / PCC 7942 / FACHB-805) (Anacystis nidulans R2).